The chain runs to 285 residues: Eukaryotic translation initiation factor 2 subunit beta (285 aa).

The segment at 30–69 (DAAVNGKENGSGDDLFAGLKKKKKKSKSVSADAEAEKEPT) is disordered. Phosphoserine is present on Ser40. Thr69 carries the phosphothreonine modification. Ser80, Ser92, and Ser112 each carry phosphoserine. Thr116 bears the Phosphothreonine mark. Phosphoserine is present on Ser118. The segment at 236–262 (CKTCKSINTELKREQSNRLFFMVCKSC) adopts a C4-type zinc-finger fold.

Belongs to the eIF-2-beta/eIF-5 family. As to quaternary structure, eukaryotic translation initiation factor 2 eIF2 is a heterotrimeric complex composed of an alpha, a beta and a gamma subunit. The factors eIF-1, eIF-2, eIF-3, TIF5/eIF-5 and methionyl-tRNAi form a multifactor complex (MFC) that may bind to the 40S ribosome. Interacts with GCD6. Interacts with GCD1. Interacts with TIF5/eIF-5. Interacts with CDC123.

The protein resides in the cytoplasm. The protein localises to the cytosol. Component of the eIF2 complex that functions in the early steps of protein synthesis by forming a ternary complex with GTP and initiator tRNA. This complex binds to a 40S ribosomal subunit, followed by mRNA binding to form a 43S pre-initiation complex (43S PIC). Junction of the 60S ribosomal subunit to form the 80S initiation complex is preceded by hydrolysis of the GTP bound to eIF2 and release of an eIF2-GDP binary complex. In order for eIF2 to recycle and catalyze another round of initiation, the GDP bound to eIF2 must exchange with GTP by way of a reaction catalyzed by eIF2B. The polypeptide is Eukaryotic translation initiation factor 2 subunit beta (SUI3) (Saccharomyces cerevisiae (strain ATCC 204508 / S288c) (Baker's yeast)).